A 261-amino-acid polypeptide reads, in one-letter code: WW domain-binding protein 2 (261 aa).

The region spanning 1 to 84 (MALNKNHSEG…YLMKDCEIKQ (84 aa)) is the GRAM domain. The residue at position 192 (Tyr-192) is a Phosphotyrosine; by YES and SRC. The PPxY motif 1 motif lies at 196 to 200 (PPPPY). Residues 196 to 209 (PPPPYPGPMEPPVS) show a composition bias toward pro residues. A disordered region spans residues 196 to 261 (PPPPYPGPME…YYPPEDKKTQ (66 aa)). A compositionally biased stretch (low complexity) spans 218–230 (AAEAKAAEAAASA). Tyr-231 carries the phosphotyrosine; by YES and SRC modification. Residues 245–254 (SQPPPPPYYP) are compositionally biased toward pro residues. The PPxY motif 2 motif lies at 248–252 (PPPPY).

Binds to the WW domain of YAP1, WWP1 and WWP2. Interacts with NEDD4. Interacts with ESR1 and UBE3A. Phosphorylated in repsonse to EGF as well as estrogen and progesterone hormones. Tyr-192 and Tyr-231 are phosphorylated by YES and SRC inducing nuclear translocation. In terms of tissue distribution, ubiquitous.

Its subcellular location is the cytoplasm. The protein resides in the nucleus. Acts as a transcriptional coactivator of estrogen and progesterone receptors (ESR1 and PGR) upon hormone activation. In presence of estrogen, binds to ESR1-responsive promoters. Synergizes with YAP1 to enhance PGR activity. Modulates expression of post-synaptic scaffolding proteins via regulation of ESR1, ESR2 and PGR. The chain is WW domain-binding protein 2 from Homo sapiens (Human).